The following is a 943-amino-acid chain: Receptor-like protein 35 (943 aa).

Residues Met1 to Ala31 form the signal peptide. Residues Ala32–Trp897 lie on the Extracellular side of the membrane. N-linked (GlcNAc...) asparagine glycosylation is found at Asn67, Asn82, Asn118, Asn147, Asn171, Asn195, Asn219, and Asn222. 11 LRR repeats span residues Leu124–Leu148, His150–Asn171, Leu172–Leu196, His198–Leu220, Asn222–Leu244, Ala245–Asn267, Leu268–Leu292, Thr293–Ser317, Leu319–Ile340, Pro341–Ser364, and Ser366–Phe389. Residues Asn291 and Asn312 are each glycosylated (N-linked (GlcNAc...) asparagine). Residues Asn354 and Asn361 are each glycosylated (N-linked (GlcNAc...) asparagine). Residues Val390–His414 form an LRR 12; degenerate repeat. Asn391 carries an N-linked (GlcNAc...) asparagine glycan. LRR repeat units follow at residues Leu415–Tyr439, Phe440–Ser463, Ser467–Gln490, His491–Leu514, Pro515–His537, Lys544–Leu568, Arg569–Leu592, Lys593–Ser617, Arg619–Phe639, Ser640–Lys665, Gln667–Phe685, Pro686–Lys709, Leu753–Leu777, Lys778–Leu801, Thr802–Leu825, and Phe827–Arg850. A glycan (N-linked (GlcNAc...) asparagine) is linked at Asn457. 5 N-linked (GlcNAc...) asparagine glycosylation sites follow: Asn521, Asn524, Asn556, Asn582, and Asn605. An N-linked (GlcNAc...) asparagine glycan is attached at Asn653. Asn699 is a glycosylation site (N-linked (GlcNAc...) asparagine). N-linked (GlcNAc...) asparagine glycans are attached at residues Asn784 and Asn800. Residues Asn832, Asn852, and Asn882 are each glycosylated (N-linked (GlcNAc...) asparagine). The helical transmembrane segment at Ile898–Leu918 threads the bilayer. Over Val919 to His943 the chain is Cytoplasmic.

The protein belongs to the RLP family.

The protein resides in the cell membrane. The polypeptide is Receptor-like protein 35 (Arabidopsis thaliana (Mouse-ear cress)).